Consider the following 455-residue polypeptide: Phosphoglucosamine/phosphogalactosamine mutase (455 aa).

Ser97 acts as the Phosphoserine intermediate in catalysis. The Mg(2+) site is built by Ser97, Asp241, Asp243, and Asp245. Residue Ser97 is modified to Phosphoserine.

Belongs to the phosphohexose mutase family. Mg(2+) serves as cofactor. Activated by phosphorylation.

It catalyses the reaction alpha-D-glucosamine 1-phosphate = D-glucosamine 6-phosphate. The enzyme catalyses D-galactosamine 6-phosphate = alpha-D-galactosamine 1-phosphate. Functionally, involved in the synthesis of UDP-N-acetylglucosamine (UDP-GlcNAc) and UDP-N-acetylgalactosamine (UDP-GalNAc). Catalyzes the conversion of glucosamine-6-phosphate to glucosamine-1-phosphate and of galactosamine-6-phosphate to galactosamine-1-phosphate. This chain is Phosphoglucosamine/phosphogalactosamine mutase, found in Sulfurisphaera tokodaii (strain DSM 16993 / JCM 10545 / NBRC 100140 / 7) (Sulfolobus tokodaii).